We begin with the raw amino-acid sequence, 499 residues long: ADP,ATP carrier protein 5 (499 aa).

A run of 11 helical transmembrane segments spans residues 25 to 45, 61 to 81, 93 to 113, 148 to 168, 183 to 203, 223 to 243, 286 to 306, 327 to 347, 356 to 376, 380 to 400, and 468 to 488; these read LGKF…QNVL, IAGF…VIIY, IFYY…FVIY, YIVY…LLFW, FYTL…FLMM, ITLV…CCLL, LWLL…VEAV, LYIL…NNIM, AVIS…LIVF, ILSL…VSIG, and LISP…IYAV.

This sequence belongs to the ADP/ATP translocase tlc family.

It is found in the cell membrane. In terms of biological role, provides the rickettsial cell with host ATP in exchange for rickettsial ADP. This is an obligate exchange system. This energy acquiring activity is an important component of rickettsial parasitism. This chain is ADP,ATP carrier protein 5 (tlcE), found in Rickettsia conorii (strain ATCC VR-613 / Malish 7).